Reading from the N-terminus, the 1347-residue chain is DExH-box ATP-dependent RNA helicase DExH11 (1347 aa).

Residues 263-291 (ELEGDDHTAGSESPKAEAEPDAKASISNE) are disordered. Over residues 267–284 (DDHTAGSESPKAEAEPDA) the composition is skewed to basic and acidic residues. Residues 369–524 (ICCLEKGESV…WIGRTKQKEI (156 aa)) form the Helicase ATP-binding domain. 382 to 389 (AHTSAGKT) contacts ATP. Residues 472–475 (DEVH) carry the DEVH box motif. Residues 566 to 625 (SQKKKNSNAVSVAPKQQMGSSAHQDGSKSQKHEAHSRGKQNKHSSVKDVGKSSYSGNSQN) are disordered. A compositionally biased stretch (basic and acidic residues) spans 590–601 (DGSKSQKHEAHS). In terms of domain architecture, Helicase C-terminal spans 673–838 (DLTSSSEKSE…LTYIMILHLL (166 aa)).

It belongs to the DExH box helicase family. SKI2 subfamily. As to quaternary structure, component of the cytoplasmic SKI complex, which consists of SKI2, SKI3 and VIP3/SKI8. As to expression, expressed in vascular tissues of leaves and roots of young plants.

It is found in the cytoplasm. It catalyses the reaction ATP + H2O = ADP + phosphate + H(+). Functionally, component of the SKI complex which is thought to be involved in exosome-mediated RNA decay and associates with transcriptionally active genes in a manner dependent on PAF1 complex (PAF1C). Involved in the regulation of potassium deprivation stress response. This is DExH-box ATP-dependent RNA helicase DExH11 from Arabidopsis thaliana (Mouse-ear cress).